The following is a 198-amino-acid chain: Large ribosomal subunit protein uL13 (198 aa).

It belongs to the universal ribosomal protein uL13 family.

The polypeptide is Large ribosomal subunit protein uL13 (RPL13A) (Tetrahymena thermophila (strain SB210)).